Reading from the N-terminus, the 376-residue chain is Chaperone protein DnaJ (376 aa).

The J domain maps to 5-70 (DFYEVLGVER…SKRAAYDQYG (66 aa)). Residues 135–213 (GTTVTIRVPT…CHGQGRVEEQ (79 aa)) form a CR-type zinc finger. Zn(2+)-binding residues include cysteine 148, cysteine 151, cysteine 165, cysteine 168, cysteine 187, cysteine 190, cysteine 201, and cysteine 204. 4 CXXCXGXG motif repeats span residues 148–155 (CKTCDGSG), 165–172 (CTTCGGIG), 187–194 (CPRCHGSG), and 201–208 (CGSCHGQG).

Belongs to the DnaJ family. Homodimer. Zn(2+) is required as a cofactor.

The protein resides in the cytoplasm. In terms of biological role, participates actively in the response to hyperosmotic and heat shock by preventing the aggregation of stress-denatured proteins and by disaggregating proteins, also in an autonomous, DnaK-independent fashion. Unfolded proteins bind initially to DnaJ; upon interaction with the DnaJ-bound protein, DnaK hydrolyzes its bound ATP, resulting in the formation of a stable complex. GrpE releases ADP from DnaK; ATP binding to DnaK triggers the release of the substrate protein, thus completing the reaction cycle. Several rounds of ATP-dependent interactions between DnaJ, DnaK and GrpE are required for fully efficient folding. Also involved, together with DnaK and GrpE, in the DNA replication of plasmids through activation of initiation proteins. The protein is Chaperone protein DnaJ of Stutzerimonas stutzeri (Pseudomonas stutzeri).